We begin with the raw amino-acid sequence, 290 residues long: Probable septum site-determining protein MinC (290 aa).

Belongs to the MinC family. In terms of assembly, interacts with MinD and FtsZ.

In terms of biological role, cell division inhibitor that blocks the formation of polar Z ring septums. Rapidly oscillates between the poles of the cell to destabilize FtsZ filaments that have formed before they mature into polar Z rings. Prevents FtsZ polymerization. The sequence is that of Probable septum site-determining protein MinC from Heliobacterium modesticaldum (strain ATCC 51547 / Ice1).